The chain runs to 376 residues: uncharacterized protein (376 aa).

Composition is skewed to low complexity over residues 73–99 and 228–243; these read NNSINNSNSNNNSNNNKNNNNNHNNNN and SSFSSSSSSSESTVSS. Disordered stretches follow at residues 73–100 and 222–269; these read NNSINNSNSNNNSNNNKNNNNNHNNNNL and EQDP…KISD.

This is an uncharacterized protein from Saccharomyces cerevisiae (strain ATCC 204508 / S288c) (Baker's yeast).